The primary structure comprises 1009 residues: Rho GTPase-activating protein gacT (1009 aa).

2 disordered regions span residues 1–72 (MKNI…SRNH) and 89–117 (TSHHSHSHNHNHNHNHQLTQPIQQQQQTQ). Residues 12 to 23 (FHKDKKEGDKQD) are compositionally biased toward basic and acidic residues. Over residues 26–35 (GSSGSSGNSG) the composition is skewed to low complexity. The segment covering 58–69 (ESYSGDNSPTLS) has biased composition (polar residues). Residues 89 to 103 (TSHHSHSHNHNHNHN) show a composition bias toward basic residues. The segment covering 104 to 117 (HQLTQPIQQQQQTQ) has biased composition (low complexity). The Rho-GAP domain maps to 163-351 (VPLTQVPCRA…EVFPQHHLYY (189 aa)). 3 disordered regions span residues 388 to 420 (TISGLLPSNGQNNSPSSSTITSTTITSPHDSTA), 432 to 482 (PEQQ…TFRV), and 508 to 571 (GPSG…TTDQ). Composition is skewed to low complexity over residues 394–415 (PSNGQNNSPSSSTITSTTITSP), 432–468 (PEQQQQMLQQQQQQQQQQEKQSSSSLSQSQQSIQPIS), and 512–521 (TTGTTPNGGS). Residues 522–546 (LSIGGGNGGNGGSSLSVGSGGGNGG) show a composition bias toward gly residues. Over residues 547 to 557 (SSLSVGSNTSV) the composition is skewed to low complexity. A coiled-coil region spans residues 580–656 (AYTNNEDTKA…IEREIEKKRL (77 aa)). The disordered stretch occupies residues 686–713 (ISTIDGSGGSNRNSKNYGNGSSSSSNRR). Positions 695-713 (SNRNSKNYGNGSSSSSNRR) are enriched in low complexity. Residues 715–743 (SNTINQQLQMQLQQLQIQQQQYQQTQQSQ) are a coiled coil. Positions 759-781 (TTTTTTTSSGSNRFSSNRYKPVD) are disordered. The segment covering 766–781 (SSGSNRFSSNRYKPVD) has biased composition (polar residues). Residues 839 to 952 (ENLVLLQQQY…IEEIHLLETY (114 aa)) adopt a coiled-coil conformation. The disordered stretch occupies residues 965–1009 (STTKDLLTRSRSPTLPSSINMSTSSLGSSSSSAYNNNNNNNNVPK). A compositionally biased stretch (polar residues) spans 967–980 (TKDLLTRSRSPTLP). Residues 981-1009 (SSINMSTSSLGSSSSSAYNNNNNNNNVPK) are compositionally biased toward low complexity.

It localises to the cytoplasm. Functionally, rho GTPase-activating protein involved in the signal transduction pathway. The polypeptide is Rho GTPase-activating protein gacT (gacT) (Dictyostelium discoideum (Social amoeba)).